The sequence spans 482 residues: Bifunctional protein GlmU (482 aa).

The tract at residues methionine 1–arginine 238 is pyrophosphorylase. Residues leucine 12–glycine 15, lysine 26, glutamine 79, and glycine 84–threonine 85 contribute to the UDP-N-acetyl-alpha-D-glucosamine site. Mg(2+) is bound at residue aspartate 110. 4 residues coordinate UDP-N-acetyl-alpha-D-glucosamine: glycine 147, glutamate 163, asparagine 178, and asparagine 236. Asparagine 236 is a binding site for Mg(2+). Positions leucine 239–alanine 259 are linker. Positions glycine 260–serine 482 are N-acetyltransferase. Residues arginine 341 and lysine 359 each contribute to the UDP-N-acetyl-alpha-D-glucosamine site. The active-site Proton acceptor is histidine 371. The UDP-N-acetyl-alpha-D-glucosamine site is built by tyrosine 374 and asparagine 385. Acetyl-CoA is bound by residues alanine 388, asparagine 394–tyrosine 395, serine 413, alanine 431, and arginine 448. The segment at valine 458–serine 482 is disordered. A compositionally biased stretch (low complexity) spans serine 465–glutamine 476.

The protein in the N-terminal section; belongs to the N-acetylglucosamine-1-phosphate uridyltransferase family. In the C-terminal section; belongs to the transferase hexapeptide repeat family. As to quaternary structure, homotrimer. It depends on Mg(2+) as a cofactor.

It is found in the cytoplasm. The catalysed reaction is alpha-D-glucosamine 1-phosphate + acetyl-CoA = N-acetyl-alpha-D-glucosamine 1-phosphate + CoA + H(+). It catalyses the reaction N-acetyl-alpha-D-glucosamine 1-phosphate + UTP + H(+) = UDP-N-acetyl-alpha-D-glucosamine + diphosphate. The protein operates within nucleotide-sugar biosynthesis; UDP-N-acetyl-alpha-D-glucosamine biosynthesis; N-acetyl-alpha-D-glucosamine 1-phosphate from alpha-D-glucosamine 6-phosphate (route II): step 2/2. Its pathway is nucleotide-sugar biosynthesis; UDP-N-acetyl-alpha-D-glucosamine biosynthesis; UDP-N-acetyl-alpha-D-glucosamine from N-acetyl-alpha-D-glucosamine 1-phosphate: step 1/1. It participates in bacterial outer membrane biogenesis; LPS lipid A biosynthesis. Catalyzes the last two sequential reactions in the de novo biosynthetic pathway for UDP-N-acetylglucosamine (UDP-GlcNAc). The C-terminal domain catalyzes the transfer of acetyl group from acetyl coenzyme A to glucosamine-1-phosphate (GlcN-1-P) to produce N-acetylglucosamine-1-phosphate (GlcNAc-1-P), which is converted into UDP-GlcNAc by the transfer of uridine 5-monophosphate (from uridine 5-triphosphate), a reaction catalyzed by the N-terminal domain. The protein is Bifunctional protein GlmU of Streptomyces griseus subsp. griseus (strain JCM 4626 / CBS 651.72 / NBRC 13350 / KCC S-0626 / ISP 5235).